The sequence spans 183 residues: Capsid protein (183 aa).

Residues 136–183 (NAPILSTLPETTVVRRRGRSPRRRTPSPRRRRSESPRRRRSQSRESQC) form a disordered region. Residues 149–176 (VRRRGRSPRRRTPSPRRRRSESPRRRRS) are compositionally biased toward basic residues. Residues Ser155, Ser162, and Ser170 each carry the phosphoserine; by host modification. The stretch at 155 to 160 (SPRRRT) is one 1; half-length repeat. Positions 155–176 (SPRRRTPSPRRRRSESPRRRRS) are 3 X 7 AA repeats of S-P-R-R-R-[PR]-S. The short motif at 158-175 (RRTPSPRRRRSESPRRRR) is the Bipartite nuclear localization signal element. Repeat copies occupy residues 162-168 (SPRRRRS) and 170-176 (SPRRRRS). Positions 177-183 (QSRESQC) are RNA binding.

The protein belongs to the orthohepadnavirus core antigen family. In terms of assembly, homodimerizes, then multimerizes. Interacts with cytosol exposed regions of viral L glycoprotein present in the reticulum-to-Golgi compartment. Interacts with human FLNB. Phosphorylated form interacts with host importin alpha; this interaction depends on the exposure of the NLS, which itself depends upon genome maturation and/or phosphorylation of the capsid protein. Interacts with host NUP153. In terms of processing, phosphorylated by host SRPK1, SRPK2, and maybe protein kinase C or GAPDH. Phosphorylation is critical for pregenomic RNA packaging. Protein kinase C phosphorylation is stimulated by HBx protein and may play a role in transport of the viral genome to the nucleus at the late step during the viral replication cycle.

It localises to the virion. Its subcellular location is the host cytoplasm. Self assembles to form an icosahedral capsid. Most capsids appear to be large particles with an icosahedral symmetry of T=4 and consist of 240 copies of capsid protein, though a fraction forms smaller T=3 particles consisting of 180 capsid proteins. Entering capsids are transported along microtubules to the nucleus. Phosphorylation of the capsid is thought to induce exposure of nuclear localization signal in the C-terminal portion of the capsid protein that allows binding to the nuclear pore complex via the importin (karyopherin-) alpha and beta. Capsids are imported in intact form through the nuclear pore into the nuclear basket, where it probably binds NUP153. Only capsids that contain the mature viral genome can release the viral DNA and capsid protein into the nucleoplasm. Immature capsids get stuck in the basket. Capsids encapsulate the pre-genomic RNA and the P protein. Pre-genomic RNA is reverse-transcribed into DNA while the capsid is still in the cytoplasm. The capsid can then either be directed to the nucleus, providing more genomes for transcription, or bud through the endoplasmic reticulum to provide new virions. This is Capsid protein from Homo sapiens (Human).